A 196-amino-acid chain; its full sequence is DnaA initiator-associating protein DiaA (196 aa).

Residues Leu34 to Asp196 form the SIS domain.

Belongs to the SIS family. DiaA subfamily. Homotetramer; dimer of dimers.

In terms of biological role, required for the timely initiation of chromosomal replication via direct interactions with the DnaA initiator protein. This Yersinia pseudotuberculosis serotype O:1b (strain IP 31758) protein is DnaA initiator-associating protein DiaA.